Reading from the N-terminus, the 352-residue chain is Glycerol-3-phosphate dehydrogenase 1-like protein (352 aa).

Residue 13 to 18 (GSGNWG) participates in NAD(+) binding. Lysine 123 is a binding site for substrate. Alanine 156 lines the NAD(+) pocket. Lysine 207 functions as the Proton acceptor in the catalytic mechanism. NAD(+) is bound by residues arginine 272, lysine 299, and glutamine 301. 272–273 (RN) contacts substrate.

This sequence belongs to the NAD-dependent glycerol-3-phosphate dehydrogenase family.

The protein resides in the cytoplasm. The enzyme catalyses sn-glycerol 3-phosphate + NAD(+) = dihydroxyacetone phosphate + NADH + H(+). Its function is as follows. Plays a role in regulating cardiac sodium current. This is Glycerol-3-phosphate dehydrogenase 1-like protein (gpd1l) from Xenopus tropicalis (Western clawed frog).